The sequence spans 727 residues: Elongation factor 2 (727 aa).

Positions 19–260 constitute a tr-type G domain; the sequence is DQIRNMGICA…MSIKHLPNPL (242 aa). GTP is bound by residues 28 to 35, 94 to 98, and 148 to 151; these read AHIDHGKT, DTPGH, and NKVD. The residue at position 603 (H603) is a Diphthamide.

This sequence belongs to the TRAFAC class translation factor GTPase superfamily. Classic translation factor GTPase family. EF-G/EF-2 subfamily.

It is found in the cytoplasm. Catalyzes the GTP-dependent ribosomal translocation step during translation elongation. During this step, the ribosome changes from the pre-translocational (PRE) to the post-translocational (POST) state as the newly formed A-site-bound peptidyl-tRNA and P-site-bound deacylated tRNA move to the P and E sites, respectively. Catalyzes the coordinated movement of the two tRNA molecules, the mRNA and conformational changes in the ribosome. This is Elongation factor 2 from Methanococcus maripaludis (strain C5 / ATCC BAA-1333).